Here is a 537-residue protein sequence, read N- to C-terminus: Biotin carboxylase, chloroplastic (537 aa).

Residues 1-71 constitute a chloroplast transit peptide; that stretch reads MDASMITNSK…ATSGGLGVTC (71 aa). ATP-binding positions include Lys-188, Lys-230, 236–237, 272–275, and His-280; these read GG and EKFV. Residues 192–389 form the ATP-grasp domain; that stretch reads RETMKNAGVP…LIEEQIRVAM (198 aa). Position 309 (Lys-309) interacts with hydrogencarbonate. Glu-347 and Glu-360 together coordinate ATP. Mg(2+) is bound by residues Glu-347, Glu-360, and Asn-362. Glu-347, Glu-360, and Asn-362 together coordinate Mn(2+). The hydrogencarbonate site is built by Arg-364, Val-367, and Arg-410. Arg-364 is a catalytic residue. Arg-410 is a biotin binding site.

As to quaternary structure, acetyl-CoA carboxylase is a heterohexamer composed of biotin carboxyl carrier protein, biotin carboxylase and two subunits each of ACCase subunit alpha and ACCase plastid-coded subunit beta (accD). It depends on Mg(2+) as a cofactor. The cofactor is Mn(2+). In terms of tissue distribution, accumulates in fatty acids synthesizing tissues. Mostly expressed in siliques, developing leaves, and flowers, present in roots and embryos (especially at torpedo stage), and, to a lower extent, in mature leaves.

It is found in the plastid. The protein resides in the chloroplast. It catalyses the reaction N(6)-biotinyl-L-lysyl-[protein] + hydrogencarbonate + ATP = N(6)-carboxybiotinyl-L-lysyl-[protein] + ADP + phosphate + H(+). It participates in lipid metabolism; malonyl-CoA biosynthesis; malonyl-CoA from acetyl-CoA: step 1/1. Functionally, this protein is a component of the acetyl coenzyme A carboxylase complex; first, biotin carboxylase catalyzes the carboxylation of the carrier protein and then the transcarboxylase transfers the carboxyl group to form malonyl-CoA. The protein is Biotin carboxylase, chloroplastic (CAC2) of Arabidopsis thaliana (Mouse-ear cress).